The primary structure comprises 1178 residues: Niemann-Pick type C1-related protein (1178 aa).

An N-linked (GlcNAc...) asparagine glycan is attached at Asn41. A run of 2 helical transmembrane segments spans residues 157 to 177 (PWLFIMVSLLATAGMSVGIFL) and 412 to 432 (VVEWLRLCAAVLVVFLYTSVV). An SSD domain is found at 414 to 570 (EWLRLCAAVL…LTFFLAGLSL (157 aa)). A glycan (N-linked (GlcNAc...) asparagine) is linked at Asn433. 4 helical membrane passes run 448 to 468 (GALASLLGYLGGAGLVYLCGV), 478 to 498 (PFLAIGIGVDDLFVIINAYSL), 516 to 536 (AGLSITITTLTNVITFIIGAL), and 545 to 565 (FCIITAGALTWGYVLCLTFFL). N-linked (GlcNAc...) asparagine glycosylation is present at Asn621. Residues 789–809 (ATVLVIFAAVTALAIYGATTL) form a helical membrane-spanning segment. Residues Asn917 and Asn943 are each glycosylated (N-linked (GlcNAc...) asparagine). 5 helical membrane-spanning segments follow: residues 986–1006 (FTLTNLSIALVCILAISLLLI), 1013–1033 (IIVVLVVSLVDLWLFGFMALI), 1037–1057 (LSMISMVNLLISIGYSVDFTI), 1080–1100 (IVMGAPVTHGMLSTLLSILAL), and 1114–1134 (MMFMVIVFAYTAGMVLLPVVL).

The protein belongs to the patched family.

The protein resides in the inner membrane complex. The catalysed reaction is cholesterol(in) = cholesterol(out). Likely facilitates the efflux of cholesterol and gangliosides from membranes. Plays a role in the regulation of lipid homeostasis. The protein is Niemann-Pick type C1-related protein of Toxoplasma gondii (strain ATCC 50611 / Me49).